A 257-amino-acid polypeptide reads, in one-letter code: MTSSSKDMKAGSVLQSSGEERRRGPLDQLPPPANSNKPLTPFSIEDILNKPSVKKSVGSLCPPRVLEKVTGSSASRNGISAPSSPLCALEELASKTFKGLEVSVIQAAEGREHINAFGQRQASKKRRKSRTAFTNHQIYELEKRFLYQKYLSPADRDQIAQQLGLTNAQVITWFQNRRAKLKRDLEEMKADVESLKKIPPQALQKLVSMEDMEDAHGGSGPISPSLSPRAFPQSPSSSRGQTTDEFSEEDEEIEVDD.

The tract at residues 1–43 is disordered; that stretch reads MTSSSKDMKAGSVLQSSGEERRRGPLDQLPPPANSNKPLTPFS. The tract at residues 1–46 is required for convergent extension movement and hypaxial myogenesis during gastrulation. Required for the formation of thick and thin myofilaments. Required for myod1 expression in the pectoral fin bud. Required for continuous expression of cxcl12a in the posterior lateral mesoderm at the tail bud stage and in adaxial cells at the 10-somite stage; that stretch reads MTSSSKDMKAGSVLQSSGEERRRGPLDQLPPPANSNKPLTPFSIED. Positions 126–185 form a DNA-binding region, homeobox; sequence RRKSRTAFTNHQIYELEKRFLYQKYLSPADRDQIAQQLGLTNAQVITWFQNRRAKLKRDL. Positions 206-257 are disordered; that stretch reads LVSMEDMEDAHGGSGPISPSLSPRAFPQSPSSSRGQTTDEFSEEDEEIEVDD. Over residues 233–243 the composition is skewed to polar residues; it reads QSPSSSRGQTT. A compositionally biased stretch (acidic residues) spans 245–257; sequence EFSEEDEEIEVDD.

In terms of assembly, interacts (via N-terminus) with tle3a/gro2 (via C-terminus).

Its subcellular location is the nucleus. Transcription factor required in several developmental processes. Involved in axis formation during embryonic development by inhibiting tle3a/gro2 from binding to tcf7l1a, thereby facilitating ctnnb1-mediated transcription of canonical Wnt/CTNNB1 signaling target genes. Regulates convergent extension movements and hypaxial myogenesis during gastrulation by activating non-canonical Wnt signaling via wnt5b. Required for the formation of myofibrils and fusion of fast muscle precursor cells, potentially via transcriptional regulation of genes specific to thick and thin myofilaments. Regulates the migration of the posterior lateral line primordium during embryonic development, possibly via regulation of cxcl12a/sdf1a expression in the posterior lateral mesoderm, thereby modulating the deposition of neuromasts at correct intervals. The chain is Transcription factor LBX2 from Danio rerio (Zebrafish).